The sequence spans 133 residues: DNA-binding protein StpA (133 aa).

The disordered stretch occupies residues 81 to 115; the sequence is AMPRSAKKRQPRPAKYRFTDFNGEEKTWTGQGRTP. The segment covering 85 to 95 has biased composition (basic residues); the sequence is SAKKRQPRPAK. A DNA-binding region spans residues 111–116; sequence QGRTPK.

This sequence belongs to the histone-like protein H-NS family. In terms of assembly, forms homodimers, can interact with H-NS.

The protein resides in the cytoplasm. Its subcellular location is the nucleoid. A DNA-binding protein that acts in a fashion similar to H-NS, repressing gene transcription. A subset of H-NS/StpA-regulated genes require auxillary proteins for repression; these auxillary proteins (Hha and other similar proteins) may also modulate oligomerization of the H-NS/StpA complex. This chain is DNA-binding protein StpA (stpA), found in Salmonella typhi.